Consider the following 429-residue polypeptide: Glutamate-1-semialdehyde 2,1-aminomutase (429 aa).

An N6-(pyridoxal phosphate)lysine modification is found at K265.

The protein belongs to the class-III pyridoxal-phosphate-dependent aminotransferase family. HemL subfamily. As to quaternary structure, homodimer. Pyridoxal 5'-phosphate is required as a cofactor.

Its subcellular location is the cytoplasm. The catalysed reaction is (S)-4-amino-5-oxopentanoate = 5-aminolevulinate. The protein operates within porphyrin-containing compound metabolism; protoporphyrin-IX biosynthesis; 5-aminolevulinate from L-glutamyl-tRNA(Glu): step 2/2. The chain is Glutamate-1-semialdehyde 2,1-aminomutase from Ectopseudomonas mendocina (strain ymp) (Pseudomonas mendocina).